Reading from the N-terminus, the 503-residue chain is Catalase (503 aa).

The first 21 residues, 1 to 21 (MHMSKSFLIISMGFVAVSVQA), serve as a signal peptide directing secretion. Catalysis depends on residues His72 and Asn145. Tyr353 is a heme binding site.

Belongs to the catalase family. Requires heme as cofactor.

It localises to the periplasm. The catalysed reaction is 2 H2O2 = O2 + 2 H2O. Functionally, decomposes hydrogen peroxide into water and oxygen; serves to protect cells from the toxic effects of hydrogen peroxide. The sequence is that of Catalase from Vibrio cholerae serotype O1 (strain ATCC 39315 / El Tor Inaba N16961).